We begin with the raw amino-acid sequence, 401 residues long: 1-deoxy-D-xylulose 5-phosphate reductoisomerase (401 aa).

NADPH is bound by residues Thr-10, Gly-11, Ser-12, Ile-13, Gly-36, Arg-37, Asn-38, and Asn-124. Lys-125 is a binding site for 1-deoxy-D-xylulose 5-phosphate. NADPH is bound at residue Glu-126. Asp-150 provides a ligand contact to Mn(2+). Ser-151, Glu-152, Ser-176, and His-199 together coordinate 1-deoxy-D-xylulose 5-phosphate. Glu-152 contacts Mn(2+). NADPH is bound at residue Gly-205. Ser-212, Asn-217, Lys-218, and Glu-221 together coordinate 1-deoxy-D-xylulose 5-phosphate. Residue Glu-221 participates in Mn(2+) binding.

This sequence belongs to the DXR family. It depends on Mg(2+) as a cofactor. Mn(2+) is required as a cofactor.

The catalysed reaction is 2-C-methyl-D-erythritol 4-phosphate + NADP(+) = 1-deoxy-D-xylulose 5-phosphate + NADPH + H(+). It participates in isoprenoid biosynthesis; isopentenyl diphosphate biosynthesis via DXP pathway; isopentenyl diphosphate from 1-deoxy-D-xylulose 5-phosphate: step 1/6. In terms of biological role, catalyzes the NADPH-dependent rearrangement and reduction of 1-deoxy-D-xylulose-5-phosphate (DXP) to 2-C-methyl-D-erythritol 4-phosphate (MEP). This chain is 1-deoxy-D-xylulose 5-phosphate reductoisomerase, found in Acaryochloris marina (strain MBIC 11017).